A 260-amino-acid chain; its full sequence is Type III pantothenate kinase (260 aa).

6 to 13 (DAGNTNIV) contributes to the ATP binding site. A substrate-binding site is contributed by 108–111 (GADR). Asp-110 functions as the Proton acceptor in the catalytic mechanism. A K(+)-binding site is contributed by Asp-130. Thr-133 provides a ligand contact to ATP. Thr-187 serves as a coordination point for substrate.

The protein belongs to the type III pantothenate kinase family. Homodimer. Requires NH4(+) as cofactor. K(+) serves as cofactor.

The protein resides in the cytoplasm. It catalyses the reaction (R)-pantothenate + ATP = (R)-4'-phosphopantothenate + ADP + H(+). Its pathway is cofactor biosynthesis; coenzyme A biosynthesis; CoA from (R)-pantothenate: step 1/5. Functionally, catalyzes the phosphorylation of pantothenate (Pan), the first step in CoA biosynthesis. This chain is Type III pantothenate kinase, found in Rhizorhabdus wittichii (strain DSM 6014 / CCUG 31198 / JCM 15750 / NBRC 105917 / EY 4224 / RW1) (Sphingomonas wittichii).